Reading from the N-terminus, the 305-residue chain is UDP-3-O-acyl-N-acetylglucosamine deacetylase (305 aa).

Zn(2+) contacts are provided by His-79, His-238, and Asp-242. Residue His-265 is the Proton donor of the active site.

This sequence belongs to the LpxC family. Requires Zn(2+) as cofactor.

The catalysed reaction is a UDP-3-O-[(3R)-3-hydroxyacyl]-N-acetyl-alpha-D-glucosamine + H2O = a UDP-3-O-[(3R)-3-hydroxyacyl]-alpha-D-glucosamine + acetate. Its pathway is glycolipid biosynthesis; lipid IV(A) biosynthesis; lipid IV(A) from (3R)-3-hydroxytetradecanoyl-[acyl-carrier-protein] and UDP-N-acetyl-alpha-D-glucosamine: step 2/6. Functionally, catalyzes the hydrolysis of UDP-3-O-myristoyl-N-acetylglucosamine to form UDP-3-O-myristoylglucosamine and acetate, the committed step in lipid A biosynthesis. The protein is UDP-3-O-acyl-N-acetylglucosamine deacetylase of Salmonella agona (strain SL483).